We begin with the raw amino-acid sequence, 689 residues long: Glycine--tRNA ligase beta subunit (689 aa).

The protein belongs to the class-II aminoacyl-tRNA synthetase family. In terms of assembly, tetramer of two alpha and two beta subunits.

Its subcellular location is the cytoplasm. It catalyses the reaction tRNA(Gly) + glycine + ATP = glycyl-tRNA(Gly) + AMP + diphosphate. The sequence is that of Glycine--tRNA ligase beta subunit from Shewanella putrefaciens (strain CN-32 / ATCC BAA-453).